The sequence spans 44 residues: uncharacterized protein (44 aa).

This is an uncharacterized protein from Haemophilus influenzae (strain ATCC 51907 / DSM 11121 / KW20 / Rd).